Consider the following 764-residue polypeptide: Probable cyclic nucleotide-gated ion channel 20, chloroplastic (764 aa).

The N-terminal 25 residues, 1–25 (MASHNENDDIPMLPISDPSSRTRAR), are a transit peptide targeting the chloroplast. The interval 1–40 (MASHNENDDIPMLPISDPSSRTRARAFTSRSRSVSLSNPT) is disordered. A compositionally biased stretch (low complexity) spans 19 to 33 (SSRTRARAFTSRSRS). Residues 26-204 (AFTSRSRSVS…PHAKEVQTWT (179 aa)) are Stromal-facing. Residues 205 to 225 (KFFALSCLLAIFIDPLFFFLI) traverse the membrane as a helical segment. The Lumenal portion of the chain corresponds to 226–242 (KVQEQNKCIMIDWPMTK). The helical transmembrane segment at 243–263 (AFVAVRSVTDVIFTMNILLQF) threads the bilayer. The Stromal portion of the chain corresponds to 264–295 (RLAYVARESTVVGAGQLVSHPKKIALHYLKGK). A helical membrane pass occupies residues 296 to 316 (FFLDLFIVMPLPQILILWIIP). Over 317 to 329 (AHLGASGANYAKN) the chain is Lumenal. A helical membrane pass occupies residues 330–350 (LLRAAVLFQYIPKLYRLLPFL). Residues 351 to 366 (AGQTPTGFIFESAWAN) lie on the Stromal side of the membrane. A helical transmembrane segment spans residues 367–387 (FVINLLTFMLAGHVVGSCWYL). Topologically, residues 388-488 (FGLQRVNQCL…GNQVPSYFLG (101 aa)) are lumenal. The helical transmembrane segment at 489-509 (EVFFTMGIIGLGLLLFALLIG) threads the bilayer. Over 510–764 (NMQNFLQALG…LCTPQSSYSL (255 aa)) the chain is Stromal. A nucleoside 3',5'-cyclic phosphate contacts are provided by residues 593–710 (IFSL…EDVT) and Glu-658. Residues 713 to 729 (FSRFLRSHRVQGAIRYD) form a calmodulin-binding region. One can recognise an IQ domain in the interval 734–763 (RLRAARQIQVAWRYRRRRLHRLCTPQSSYS).

It belongs to the cyclic nucleotide-gated cation channel (TC 1.A.1.5) family. As to quaternary structure, homotetramer or heterotetramer.

The protein resides in the plastid. Its subcellular location is the chloroplast thylakoid membrane. Probable cyclic nucleotide-gated ion channel. This chain is Probable cyclic nucleotide-gated ion channel 20, chloroplastic (CNGC20), found in Arabidopsis thaliana (Mouse-ear cress).